A 475-amino-acid chain; its full sequence is Squamosa promoter-binding-like protein 12 (475 aa).

A disordered region spans residues 49 to 73 (NHGSTNSSGGTFTSSSELANGSSKS). The segment covering 51–73 (GSTNSSGGTFTSSSELANGSSKS) has biased composition (low complexity). Residues 177 to 254 (SSYCQVEGCK…SDHNARRRKP (78 aa)) form an SBP-type zinc finger. 8 residues coordinate Zn(2+): C180, C185, C202, H205, C221, C224, H228, and C240. The short motif at 237 to 253 (KKSCRRRLSDHNARRRK) is the Bipartite nuclear localization signal element. The segment at 437–475 (GGGGFWQDGDDPPPLDHASQAQAFMHPGNGSSSGYGHLH) is disordered. The segment covering 465-475 (NGSSSGYGHLH) has biased composition (polar residues).

In terms of tissue distribution, expressed in young panicles.

The protein localises to the nucleus. In terms of biological role, trans-acting factor that binds specifically to the consensus nucleotide sequence 5'-TNCGTACAA-3'. May be involved in panicle development. The protein is Squamosa promoter-binding-like protein 12 (SPL12) of Oryza sativa subsp. japonica (Rice).